The primary structure comprises 851 residues: DNA mismatch repair protein MutS (851 aa).

Position 602–609 (602–609 (GPNMSGKS)) interacts with ATP.

Belongs to the DNA mismatch repair MutS family.

In terms of biological role, this protein is involved in the repair of mismatches in DNA. It is possible that it carries out the mismatch recognition step. This protein has a weak ATPase activity. The protein is DNA mismatch repair protein MutS of Streptococcus pyogenes serotype M6 (strain ATCC BAA-946 / MGAS10394).